A 565-amino-acid chain; its full sequence is MSEQKLALNEYLKTDSDYLRGTIKEGLDSSVTGSFSDGDQQLIKFHGFYQQDDRDLRNERKEQKLEPLYSFMLRARVPGGICTPQQWLGVDKIASTLTSSNSIRLTTRQTFQYHGIPKRNLKTIIQDLDRQALDSIAACGDVNRNVMCNPNPVESKLHEQAYAVAKKLSDHLLPHTRAYAEIWLDEEKLLTTEDETVEPVYGKTYLPRKFKMAVAVPPDNDVDVYTNDLGFIAVAENGELVGFNLTAGGGMGSTHGEVETFPRLADDFGFIKTEDVMKFAEAVMTVQRDWGNRSNRKRSRLKYTIVDHGYEKFKAEVEARAGVKFEPKRDVVIGDRGDRYGWVEGVDGKWHLTLFIESGRIKDLPGQTLQTGLREIAKIHKGDFRMTSNQNMIIAGVAAEDKATIEGLARKHGLLGQVLTQTRGHSIACVALPTCPLAMAEAERYFPEFIDHIDALQAKHGISEQAIVVRMTGCPNGCARPFAAEIGLVGKAPGRYNLYLGASFEGTRLNKMHRENIQEADILAELDTLFGRYAVERDAGETFGNFTVRVGVVKAVIDAAKDFHG.

Cys-429, Cys-435, Cys-474, and Cys-478 together coordinate [4Fe-4S] cluster. Cys-478 lines the siroheme pocket.

Belongs to the nitrite and sulfite reductase 4Fe-4S domain family. As to quaternary structure, alpha(8)-beta(8). The alpha component is a flavoprotein, the beta component is a hemoprotein. Siroheme serves as cofactor. Requires [4Fe-4S] cluster as cofactor.

The enzyme catalyses hydrogen sulfide + 3 NADP(+) + 3 H2O = sulfite + 3 NADPH + 4 H(+). It participates in sulfur metabolism; hydrogen sulfide biosynthesis; hydrogen sulfide from sulfite (NADPH route): step 1/1. Functionally, component of the sulfite reductase complex that catalyzes the 6-electron reduction of sulfite to sulfide. This is one of several activities required for the biosynthesis of L-cysteine from sulfate. This Shewanella sp. (strain W3-18-1) protein is Sulfite reductase [NADPH] hemoprotein beta-component.